The following is a 209-amino-acid chain: NADH-quinone oxidoreductase subunit C (209 aa).

Belongs to the complex I 30 kDa subunit family. As to quaternary structure, NDH-1 is composed of 14 different subunits. Subunits NuoB, C, D, E, F, and G constitute the peripheral sector of the complex.

The protein localises to the cell inner membrane. The enzyme catalyses a quinone + NADH + 5 H(+)(in) = a quinol + NAD(+) + 4 H(+)(out). Its function is as follows. NDH-1 shuttles electrons from NADH, via FMN and iron-sulfur (Fe-S) centers, to quinones in the respiratory chain. The immediate electron acceptor for the enzyme in this species is believed to be ubiquinone. Couples the redox reaction to proton translocation (for every two electrons transferred, four hydrogen ions are translocated across the cytoplasmic membrane), and thus conserves the redox energy in a proton gradient. The sequence is that of NADH-quinone oxidoreductase subunit C from Xanthobacter autotrophicus (strain ATCC BAA-1158 / Py2).